A 184-amino-acid chain; its full sequence is 1,6-anhydro-N-acetylmuramyl-L-alanine amidase AmpD (184 aa).

The 142-residue stretch at 30-171 (QDISLLVIHY…ISPKRKIDPG (142 aa)) folds into the N-acetylmuramoyl-L-alanine amidase domain. Histidine 38 contacts Zn(2+). Glutamate 120 serves as the catalytic Proton acceptor. Zn(2+)-binding residues include histidine 159 and aspartate 169.

This sequence belongs to the N-acetylmuramoyl-L-alanine amidase 2 family. Zn(2+) serves as cofactor.

Its subcellular location is the cytoplasm. It carries out the reaction Hydrolyzes the link between N-acetylmuramoyl residues and L-amino acid residues in certain cell-wall glycopeptides.. Involved in cell wall peptidoglycan recycling. Specifically cleaves the amide bond between the lactyl group of N-acetylmuramic acid and the alpha-amino group of the L-alanine in degradation products containing an anhydro N-acetylmuramyl moiety. The chain is 1,6-anhydro-N-acetylmuramyl-L-alanine amidase AmpD (ampD) from Haemophilus influenzae (strain ATCC 51907 / DSM 11121 / KW20 / Rd).